The chain runs to 493 residues: Keratin, type II cuticular Hb3 (493 aa).

A head region spans residues 1 to 111 (MTCGFNSIGC…PNAQCVKQEE (111 aa)). The IF rod domain occupies 111-422 (EKEQIKSLNS…RLLEGEEQRL (312 aa)). The interval 112 to 146 (KEQIKSLNSRFAAFIDKVRFLEQQNKLLETKLQFY) is coil 1A. The linker 1 stretch occupies residues 147-156 (QNRECCQSNL). The tract at residues 157–257 (EPLFAGYIET…YEEEIRILQS (101 aa)) is coil 1B. K217 is covalently cross-linked (Glycyl lysine isopeptide (Lys-Gly) (interchain with G-Cter in SUMO1)). The segment at 258 to 274 (HISDTSVVVKLDNSRDL) is linker 12. The coil 2 stretch occupies residues 275–418 (NMDCIVAEIK…ATYRRLLEGE (144 aa)). The interval 419 to 493 (EQRLCEGVEA…GGGSCGQGRH (75 aa)) is tail.

Belongs to the intermediate filament family. In terms of assembly, heterotetramer of two type I and two type II keratins. Synthesis begins in the cortex 10-15 cell layers above the apex of the dermal papilla and ends abruptly in the middle of the cortex.

In Homo sapiens (Human), this protein is Keratin, type II cuticular Hb3 (KRT83).